The sequence spans 537 residues: Multidrug resistance protein Stp (537 aa).

14 helical membrane passes run 6 to 26, 46 to 66, 77 to 97, 104 to 124, 136 to 156, 163 to 183, 200 to 220, 223 to 243, 262 to 282, 300 to 320, 327 to 347, 352 to 372, 397 to 417, and 478 to 498; these read LLTL…ALIV, WVVA…ATLA, IGVS…SIAV, AQGL…SAAF, IWTA…GLLV, SIFY…LCYV, LLFI…PQIG, SVQT…FVWL, YALA…MLLL, LMIL…GHLV, VPIL…IFSE, ALVL…LTPI, AIGS…WLSA, and VALL…WRWF.

Belongs to the major facilitator superfamily. EmrB family.

The protein resides in the cell membrane. This chain is Multidrug resistance protein Stp (stp), found in Mycobacterium tuberculosis (strain CDC 1551 / Oshkosh).